The primary structure comprises 497 residues: Glycerol kinase (497 aa).

T12 lines the ADP pocket. 3 residues coordinate ATP: T12, T13, and S14. Position 12 (T12) interacts with sn-glycerol 3-phosphate. R16 serves as a coordination point for ADP. The sn-glycerol 3-phosphate site is built by R82, E83, Y134, and D243. 5 residues coordinate glycerol: R82, E83, Y134, D243, and Q244. ADP is bound by residues T265 and G308. ATP-binding residues include T265, G308, Q312, and G409. G409 and N413 together coordinate ADP.

It belongs to the FGGY kinase family.

It carries out the reaction glycerol + ATP = sn-glycerol 3-phosphate + ADP + H(+). Its pathway is polyol metabolism; glycerol degradation via glycerol kinase pathway; sn-glycerol 3-phosphate from glycerol: step 1/1. Its activity is regulated as follows. Inhibited by fructose 1,6-bisphosphate (FBP). Its function is as follows. Key enzyme in the regulation of glycerol uptake and metabolism. Catalyzes the phosphorylation of glycerol to yield sn-glycerol 3-phosphate. This Oleidesulfovibrio alaskensis (strain ATCC BAA-1058 / DSM 17464 / G20) (Desulfovibrio alaskensis) protein is Glycerol kinase.